A 1142-amino-acid chain; its full sequence is Desmoglein-2.1 (1142 aa).

Residues methionine 1–serine 18 form the signal peptide. Positions histidine 19–arginine 38 are excised as a propeptide. Residues glutamate 39–alanine 643 lie on the Extracellular side of the membrane. 4 Cadherin domains span residues serine 64 to phenylalanine 148, valine 156 to leucine 258, glycine 259 to phenylalanine 416, and phenylalanine 417 to leucine 527. N-linked (GlcNAc...) asparagine glycosylation occurs at asparagine 115. Residues serine 369–glycine 389 form a disordered region. N-linked (GlcNAc...) asparagine glycosylation is found at asparagine 490 and asparagine 576. A helical transmembrane segment spans residues glycine 644 to leucine 664. Topologically, residues cysteine 665–lysine 1142 are cytoplasmic. Desmoglein repeat repeat units lie at residues valine 948–proline 974, valine 975–valine 998, leucine 999–glycine 1039, and threonine 1040–serine 1071.

The protein resides in the cell junction. The protein localises to the desmosome. It is found in the cell membrane. Its subcellular location is the cytoplasm. A component of desmosome cell-cell junctions which are required for positive regulation of cellular adhesion. Involved in the interaction of plaque proteins and intermediate filaments mediating cell-cell adhesion. Required for embryogenesis, specifically for progression of epiboly and normal convergence-extension movements during gastrulation. This chain is Desmoglein-2.1, found in Danio rerio (Zebrafish).